Here is a 504-residue protein sequence, read N- to C-terminus: uncharacterized protein (504 aa).

To M.thermoautotrophicum MTH1137.

This is an uncharacterized protein from Methanocaldococcus jannaschii (strain ATCC 43067 / DSM 2661 / JAL-1 / JCM 10045 / NBRC 100440) (Methanococcus jannaschii).